The chain runs to 48 residues: Palustrin-3a (48 aa).

A disulfide bridge links cysteine 43 with cysteine 48.

In terms of tissue distribution, expressed by the skin glands.

The protein resides in the secreted. Functionally, antimicrobial activity against Gram-negative bacterium E.coli. The polypeptide is Palustrin-3a (Lithobates palustris (Pickerel frog)).